Consider the following 363-residue polypeptide: NAD(P)H-quinone oxidoreductase subunit 1, chloroplastic (363 aa).

Helical transmembrane passes span 26–46 (IIWV…GVLV), 98–118 (FSIG…VIPF), 127–147 (LSIG…GLLM), 253–273 (FGLF…FVTV), 300–320 (VFGT…FLFI), and 336–356 (LLNL…LLTT).

The protein belongs to the complex I subunit 1 family. NDH is composed of at least 16 different subunits, 5 of which are encoded in the nucleus.

Its subcellular location is the plastid. The protein localises to the chloroplast thylakoid membrane. The catalysed reaction is a plastoquinone + NADH + (n+1) H(+)(in) = a plastoquinol + NAD(+) + n H(+)(out). The enzyme catalyses a plastoquinone + NADPH + (n+1) H(+)(in) = a plastoquinol + NADP(+) + n H(+)(out). In terms of biological role, NDH shuttles electrons from NAD(P)H:plastoquinone, via FMN and iron-sulfur (Fe-S) centers, to quinones in the photosynthetic chain and possibly in a chloroplast respiratory chain. The immediate electron acceptor for the enzyme in this species is believed to be plastoquinone. Couples the redox reaction to proton translocation, and thus conserves the redox energy in a proton gradient. This Helianthus annuus (Common sunflower) protein is NAD(P)H-quinone oxidoreductase subunit 1, chloroplastic.